Reading from the N-terminus, the 411-residue chain is Citrate synthase (411 aa).

Active-site residues include H304 and D363.

It belongs to the citrate synthase family.

It carries out the reaction oxaloacetate + acetyl-CoA + H2O = citrate + CoA + H(+). It participates in carbohydrate metabolism; tricarboxylic acid cycle; isocitrate from oxaloacetate: step 1/2. The protein is Citrate synthase (gltA) of Rickettsia conorii subsp. caspia (strain A-167) (Astrakhan rickettsia).